The sequence spans 130 residues: Large ribosomal subunit protein bL20 (130 aa).

Belongs to the bacterial ribosomal protein bL20 family.

Functionally, binds directly to 23S ribosomal RNA and is necessary for the in vitro assembly process of the 50S ribosomal subunit. It is not involved in the protein synthesizing functions of that subunit. The sequence is that of Large ribosomal subunit protein bL20 from Nocardioides sp. (strain ATCC BAA-499 / JS614).